The primary structure comprises 118 residues: Protein BEX4 (118 aa).

The tract at residues 14-50 (VEKDKKNKKGGKASKQSEEESHHLEEVENKKPGGNVR) is disordered. Basic and acidic residues predominate over residues 28–44 (KQSEEESHHLEEVENKK). The interval 30-88 (SEEESHHLEEVENKKPGGNVRRKVRRLVPNFLWAIPNRHVDHSEGGEEVGRFVGQVMEA) is interaction with SIRT2. An interaction with alpha-tubulin region spans residues 30 to 118 (SEEESHHLEE…DNHYDFCLIP (89 aa)). Zn(2+) is bound at residue Cys-115.

The protein belongs to the BEX family. In terms of assembly, interacts with alpha-tubulin. Interacts with SIRT2. Ubiquitinated and degraded by the proteasome.

It is found in the cytoplasm. The protein localises to the cytoskeleton. Its subcellular location is the spindle pole. The protein resides in the nucleus. Functionally, may play a role in microtubule deacetylation by negatively regulating the SIRT2 deacetylase activity toward alpha-tubulin and thereby participate in the control of cell cycle progression and genomic stability. In absence of reductive stress, acts as a pseudosubstrate for the CRL2(FEM1B) complex: associates with FEM1B via zinc, thereby preventing association between FEM1B and its substrates. The protein is Protein BEX4 of Rattus norvegicus (Rat).